Here is a 541-residue protein sequence, read N- to C-terminus: Glucose-6-phosphate isomerase (541 aa).

Glu347 acts as the Proton donor in catalysis. Active-site residues include His378 and Lys506.

It belongs to the GPI family.

The protein resides in the cytoplasm. The catalysed reaction is alpha-D-glucose 6-phosphate = beta-D-fructose 6-phosphate. It functions in the pathway carbohydrate biosynthesis; gluconeogenesis. It participates in carbohydrate degradation; glycolysis; D-glyceraldehyde 3-phosphate and glycerone phosphate from D-glucose: step 2/4. In terms of biological role, catalyzes the reversible isomerization of glucose-6-phosphate to fructose-6-phosphate. The chain is Glucose-6-phosphate isomerase from Francisella tularensis subsp. holarctica (strain OSU18).